A 378-amino-acid chain; its full sequence is Lipid-A-disaccharide synthase (378 aa).

The protein belongs to the LpxB family.

It carries out the reaction a lipid X + a UDP-2-N,3-O-bis[(3R)-3-hydroxyacyl]-alpha-D-glucosamine = a lipid A disaccharide + UDP + H(+). It functions in the pathway bacterial outer membrane biogenesis; LPS lipid A biosynthesis. In terms of biological role, condensation of UDP-2,3-diacylglucosamine and 2,3-diacylglucosamine-1-phosphate to form lipid A disaccharide, a precursor of lipid A, a phosphorylated glycolipid that anchors the lipopolysaccharide to the outer membrane of the cell. This chain is Lipid-A-disaccharide synthase, found in Pseudomonas aeruginosa (strain UCBPP-PA14).